Here is a 1403-residue protein sequence, read N- to C-terminus: Centrosomal protein of 162 kDa (1403 aa).

The interval 18-42 (KELSDDSFENSDKTARQSKKEMKKK) is disordered. A phosphoserine mark is found at serine 157 and serine 160. The tract at residues 170 to 231 (QANAELTDDE…EKISVPKQEE (62 aa)) is disordered. Positions 208–231 (TKDEEMPSKENSKSEKISVPKQEE) are enriched in basic and acidic residues. Phosphoserine is present on residues serine 474 and serine 475. The tract at residues 476–504 (EEEGAVMGKQVPYKKARSAPPLLKRKPQS) is disordered. Positions 487–502 (PYKKARSAPPLLKRKP) are enriched in basic residues. Coiled-coil stretches lie at residues 617–670 (KRVQ…QDNY), 698–1121 (VTGE…MLSN), 1171–1206 (EVLQENYRLKNELEGLISEKNELKMKSEAVMNQFEN), and 1235–1386 (CQNA…LHRQ).

The protein belongs to the CEP162 family. As to quaternary structure, interacts with CEP290. Interacts with CPNE4. Interacts with alpha-tubulin.

The protein localises to the cytoplasm. It is found in the cytoskeleton. Its subcellular location is the microtubule organizing center. The protein resides in the centrosome. It localises to the centriole. The protein localises to the spindle. It is found in the nucleus. Functionally, required to promote assembly of the transition zone in primary cilia. Acts by specifically recognizing and binding the axonemal microtubule. Localizes to the distal ends of centrioles before ciliogenesis and directly binds to axonemal microtubule, thereby promoting and restricting transition zone formation specifically at the cilia base. Required to mediate CEP290 association with microtubules. The chain is Centrosomal protein of 162 kDa (CEP162) from Homo sapiens (Human).